A 588-amino-acid chain; its full sequence is Aspartate--tRNA(Asp/Asn) ligase (588 aa).

Glutamate 172 serves as a coordination point for L-aspartate. Residues 196-199 form an aspartate region; sequence QLFK. Residue arginine 218 participates in L-aspartate binding. ATP is bound by residues 218–220 and glutamine 227; that span reads RDE. L-aspartate is bound at residue histidine 450. Glutamate 484 is a binding site for ATP. Residue arginine 491 coordinates L-aspartate. Residue 536 to 539 coordinates ATP; sequence GLDR.

It belongs to the class-II aminoacyl-tRNA synthetase family. Type 1 subfamily. As to quaternary structure, homodimer.

The protein resides in the cytoplasm. It catalyses the reaction tRNA(Asx) + L-aspartate + ATP = L-aspartyl-tRNA(Asx) + AMP + diphosphate. In terms of biological role, aspartyl-tRNA synthetase with relaxed tRNA specificity since it is able to aspartylate not only its cognate tRNA(Asp) but also tRNA(Asn). Reaction proceeds in two steps: L-aspartate is first activated by ATP to form Asp-AMP and then transferred to the acceptor end of tRNA(Asp/Asn). The polypeptide is Aspartate--tRNA(Asp/Asn) ligase (Nitrosospira multiformis (strain ATCC 25196 / NCIMB 11849 / C 71)).